The sequence spans 335 residues: Biotin synthase (335 aa).

The Radical SAM core domain occupies 46-274; it reads YKVQLASLFS…KSKIRLSAGR (229 aa). [4Fe-4S] cluster contacts are provided by cysteine 61, cysteine 65, and cysteine 68. Residues cysteine 105, cysteine 137, cysteine 197, and arginine 269 each coordinate [2Fe-2S] cluster.

This sequence belongs to the radical SAM superfamily. Biotin synthase family. In terms of assembly, homodimer. The cofactor is [4Fe-4S] cluster. [2Fe-2S] cluster serves as cofactor.

The enzyme catalyses (4R,5S)-dethiobiotin + (sulfur carrier)-SH + 2 reduced [2Fe-2S]-[ferredoxin] + 2 S-adenosyl-L-methionine = (sulfur carrier)-H + biotin + 2 5'-deoxyadenosine + 2 L-methionine + 2 oxidized [2Fe-2S]-[ferredoxin]. It participates in cofactor biosynthesis; biotin biosynthesis; biotin from 7,8-diaminononanoate: step 2/2. In terms of biological role, catalyzes the conversion of dethiobiotin (DTB) to biotin by the insertion of a sulfur atom into dethiobiotin via a radical-based mechanism. The chain is Biotin synthase from Prochlorococcus marinus (strain MIT 9515).